The following is a 726-amino-acid chain: Catalase-peroxidase (726 aa).

The span at 1 to 12 (MSTPSDQHNTLS) shows a compositional bias: polar residues. Residues 1–34 (MSTPSDQHNTLSAGKCPFHQGNSNQTAGGGTSSR) form a disordered region. Residues 105-226 (WHSAGTYRSA…LGATEMGLIY (122 aa)) constitute a cross-link (tryptophyl-tyrosyl-methioninium (Trp-Tyr) (with M-252)). His106 (proton acceptor) is an active-site residue. Positions 226–252 (YVNPEGPNHSGDPASAAPAIRATFGNM) form a cross-link, tryptophyl-tyrosyl-methioninium (Tyr-Met) (with W-105). His267 serves as a coordination point for heme b.

It belongs to the peroxidase family. Peroxidase/catalase subfamily. Homodimer or homotetramer. Requires heme b as cofactor. In terms of processing, formation of the three residue Trp-Tyr-Met cross-link is important for the catalase, but not the peroxidase activity of the enzyme.

The enzyme catalyses H2O2 + AH2 = A + 2 H2O. The catalysed reaction is 2 H2O2 = O2 + 2 H2O. Bifunctional enzyme with both catalase and broad-spectrum peroxidase activity. The polypeptide is Catalase-peroxidase (Cronobacter sakazakii (strain ATCC BAA-894) (Enterobacter sakazakii)).